Reading from the N-terminus, the 146-residue chain is Neutral phospholipase A2 B (146 aa).

Residues 1–21 (MNPAHLLILAAVCVSPLGASS) form the signal peptide. Residues 22–27 (NRPMPL) constitute a propeptide that is removed on maturation. Intrachain disulfides connect Cys38/Cys98, Cys53/Cys145, Cys55/Cys71, Cys70/Cys126, Cys77/Cys119, Cys87/Cys112, and Cys105/Cys117. Ca(2+) contacts are provided by Tyr54, Gly56, and Gly58. Residue His74 is part of the active site. Asp75 is a Ca(2+) binding site. The active site involves Asp120.

It belongs to the phospholipase A2 family. Group I subfamily. D49 sub-subfamily. It depends on Ca(2+) as a cofactor. As to expression, expressed by the venom gland.

The protein localises to the secreted. The catalysed reaction is a 1,2-diacyl-sn-glycero-3-phosphocholine + H2O = a 1-acyl-sn-glycero-3-phosphocholine + a fatty acid + H(+). Functionally, PLA2 catalyzes the calcium-dependent hydrolysis of the 2-acyl groups in 3-sn-phosphoglycerides. The sequence is that of Neutral phospholipase A2 B from Naja sputatrix (Malayan spitting cobra).